The primary structure comprises 659 residues: Chaperone protein DnaK (659 aa).

A Phosphothreonine; by autocatalysis modification is found at Thr-201. A compositionally biased stretch (basic and acidic residues) spans 571–592; it reads RSALKEDAPTEKIKEASDELSR. The tract at residues 571–659 is disordered; sequence RSALKEDAPT…DVEIVDKPND (89 aa). Residues 600–613 show a composition bias toward low complexity; sequence AMQSQSASAAANAQ.

The protein belongs to the heat shock protein 70 family.

Functionally, acts as a chaperone. This is Chaperone protein DnaK from Chlamydia abortus (strain DSM 27085 / S26/3) (Chlamydophila abortus).